A 448-amino-acid chain; its full sequence is Glucose-6-phosphate isomerase (448 aa).

Glu-290 acts as the Proton donor in catalysis. Residues His-311 and Lys-425 contribute to the active site.

Belongs to the GPI family.

The protein localises to the cytoplasm. It catalyses the reaction alpha-D-glucose 6-phosphate = beta-D-fructose 6-phosphate. It functions in the pathway carbohydrate biosynthesis; gluconeogenesis. The protein operates within carbohydrate degradation; glycolysis; D-glyceraldehyde 3-phosphate and glycerone phosphate from D-glucose: step 2/4. Its function is as follows. Catalyzes the reversible isomerization of glucose-6-phosphate to fructose-6-phosphate. The polypeptide is Glucose-6-phosphate isomerase (Lactococcus lactis subsp. lactis (strain IL1403) (Streptococcus lactis)).